The chain runs to 300 residues: Ribosomal RNA small subunit methyltransferase H (300 aa).

S-adenosyl-L-methionine-binding positions include 33–35, D52, F86, D97, and Q104; that span reads AGH.

The protein belongs to the methyltransferase superfamily. RsmH family.

It is found in the cytoplasm. It carries out the reaction cytidine(1402) in 16S rRNA + S-adenosyl-L-methionine = N(4)-methylcytidine(1402) in 16S rRNA + S-adenosyl-L-homocysteine + H(+). Specifically methylates the N4 position of cytidine in position 1402 (C1402) of 16S rRNA. The protein is Ribosomal RNA small subunit methyltransferase H of Aliarcobacter butzleri (strain RM4018) (Arcobacter butzleri).